The primary structure comprises 460 residues: 2-methylcitrate synthase, mitochondrial (460 aa).

The N-terminal 24 residues, 1-24 (MALPLRTARHASRLAQTIGRRGYA), are a transit peptide targeting the mitochondrion. The CoA site is built by Arg69 and Lys187. His264 is an oxaloacetate binding site. Leu299 lines the CoA pocket. Residue His300 is part of the active site. Positions 341, 343, and 344 each coordinate CoA. Oxaloacetate is bound by residues His346 and Arg355. The active site involves His346. Positions 395, 396, and 401 each coordinate CoA. Asp403 is an active-site residue. Residues Arg429 and Arg449 each contribute to the oxaloacetate site.

Belongs to the citrate synthase family. Homodimer.

It localises to the mitochondrion matrix. It catalyses the reaction propanoyl-CoA + oxaloacetate + H2O = (2S,3S)-2-methylcitrate + CoA + H(+). It carries out the reaction oxaloacetate + acetyl-CoA + H2O = citrate + CoA + H(+). It functions in the pathway organic acid metabolism; propanoate degradation. Its activity is regulated as follows. Partially inhibited by ATP. Catalyzes the synthesis of (2S,3S)-2-methylcitrate from propionyl-CoA and oxaloacetate and also from acetyl-CoA and oxaloacetate with a greater efficiency. Also has citrate synthase activity and can substitute for the loss of citA activity. This chain is 2-methylcitrate synthase, mitochondrial, found in Emericella nidulans (strain FGSC A4 / ATCC 38163 / CBS 112.46 / NRRL 194 / M139) (Aspergillus nidulans).